Here is a 396-residue protein sequence, read N- to C-terminus: MTTNTVSRKVAWLRVVTLAVAAFIFNTTEFVPVGLLSDIAHSFHMQTAQVGIMLTIYAWVVALMSLPFMLMTSQVERRKLLICLFVVFIASHVLSFLSWSFTVLVISRIGVAFAHAIFWSITASLAIRMAPAGKRAQALSLIATGTALAMVLGLPLGRIVGQYFGWRMTFFAIGIGALITLLCLIKLLPLLPSEHSGSLKSLPLLFRRPALMSIYLLTVVVVTAHYTAYSYIEPFVQNIAGFSANFATALLLLLGGAGIIGSVIFGKLGNQYASALVSTAIALLLVCLALLLPAANSEIHLGVLSIFWGIAMMIIGLGMQVKVLALAPDATDVAMALFSGIFNIGIGAGALVGNQVSLHWSMSMIGYVGAVPAFAALIWSIIIFRRWPVTLEEQTQ.

Transmembrane regions (helical) follow at residues 15–35 (VVTL…PVGL), 50–70 (VGIM…PFML), 81–101 (LICL…SWSF), 103–123 (VLVI…SITA), 136–156 (AQAL…GLPL), 170–190 (FFAI…LLPL), 209–229 (PALM…YTAY), 246–266 (FATA…VIFG), 275–295 (ALVS…LPAA), 299–319 (IHLG…GLGM), 333–353 (VAMA…ALVG), and 364–384 (MIGY…IIIF).

Belongs to the major facilitator superfamily. SotB (TC 2.A.1.2) family.

It is found in the cell inner membrane. Its function is as follows. Involved in the efflux of sugars. The physiological role may be the reduction of the intracellular concentration of toxic sugars or sugar metabolites. In Escherichia coli O127:H6 (strain E2348/69 / EPEC), this protein is Probable sugar efflux transporter.